Consider the following 227-residue polypeptide: PKHD-type hydroxylase Neut_0373 (227 aa).

The 102-residue stretch at 78-179 (KIMPPFFNRY…RIACFMFIQS (102 aa)) folds into the Fe2OG dioxygenase domain. Fe cation-binding residues include His-97, Asp-99, and His-160. Residue Arg-170 participates in 2-oxoglutarate binding.

It depends on Fe(2+) as a cofactor. The cofactor is L-ascorbate.

The chain is PKHD-type hydroxylase Neut_0373 from Nitrosomonas eutropha (strain DSM 101675 / C91 / Nm57).